The primary structure comprises 91 residues: Probable Fe(2+)-trafficking protein (91 aa).

Belongs to the Fe(2+)-trafficking protein family.

In terms of biological role, could be a mediator in iron transactions between iron acquisition and iron-requiring processes, such as synthesis and/or repair of Fe-S clusters in biosynthetic enzymes. The sequence is that of Probable Fe(2+)-trafficking protein from Actinobacillus pleuropneumoniae serotype 5b (strain L20).